Here is a 468-residue protein sequence, read N- to C-terminus: ATP synthase subunit beta (468 aa).

Residue 155 to 162 (GGAGVGKT) participates in ATP binding.

It belongs to the ATPase alpha/beta chains family. As to quaternary structure, F-type ATPases have 2 components, CF(1) - the catalytic core - and CF(0) - the membrane proton channel. CF(1) has five subunits: alpha(3), beta(3), gamma(1), delta(1), epsilon(1). CF(0) has three main subunits: a(1), b(2) and c(9-12). The alpha and beta chains form an alternating ring which encloses part of the gamma chain. CF(1) is attached to CF(0) by a central stalk formed by the gamma and epsilon chains, while a peripheral stalk is formed by the delta and b chains.

The protein resides in the cell membrane. It carries out the reaction ATP + H2O + 4 H(+)(in) = ADP + phosphate + 5 H(+)(out). Its function is as follows. Produces ATP from ADP in the presence of a proton gradient across the membrane. The catalytic sites are hosted primarily by the beta subunits. The chain is ATP synthase subunit beta from Streptococcus pyogenes serotype M1.